The chain runs to 831 residues: Periplasmic nitrate reductase (831 aa).

Residues 1 to 31 (MKLSRRDFMKANAAVAAAAAAGLTIPTVAKA) constitute a signal peptide (tat-type signal). The 4Fe-4S Mo/W bis-MGD-type domain maps to 40-96 (IKWDKAPCRFCGTGCGVLVGTQNGRIVASQGDPDSPVNRGLNCVKGYFLPKIMYGKD). Positions 47, 50, 54, and 82 each coordinate [4Fe-4S] cluster. Mo-bis(molybdopterin guanine dinucleotide)-binding positions include lysine 84, glutamine 151, asparagine 176, cysteine 180, 213–220 (WGSNMAEM), 244–248 (STFEH), 263–265 (QTD), methionine 373, glutamine 377, asparagine 483, 509–510 (SD), lysine 532, aspartate 559, and 719–728 (TGRVLEHWHT). Position 795 (phenylalanine 795) interacts with substrate. Asparagine 803 and lysine 820 together coordinate Mo-bis(molybdopterin guanine dinucleotide).

This sequence belongs to the prokaryotic molybdopterin-containing oxidoreductase family. NasA/NapA/NarB subfamily. In terms of assembly, component of the periplasmic nitrate reductase NapAB complex composed of NapA and NapB. It depends on [4Fe-4S] cluster as a cofactor. Requires Mo-bis(molybdopterin guanine dinucleotide) as cofactor. Predicted to be exported by the Tat system. The position of the signal peptide cleavage has not been experimentally proven.

The protein resides in the periplasm. The catalysed reaction is 2 Fe(II)-[cytochrome] + nitrate + 2 H(+) = 2 Fe(III)-[cytochrome] + nitrite + H2O. In terms of biological role, catalytic subunit of the periplasmic nitrate reductase complex NapAB. Receives electrons from NapB and catalyzes the reduction of nitrate to nitrite. The protein is Periplasmic nitrate reductase of Yersinia enterocolitica serotype O:8 / biotype 1B (strain NCTC 13174 / 8081).